The primary structure comprises 387 residues: Dual specificity protein phosphatase MPK-4 (387 aa).

A compositionally biased stretch (polar residues) spans 1 to 15; the sequence is MEQSQSQRQAWPSSS. Positions 1–27 are disordered; it reads MEQSQSQRQAWPSSSAGGGKAQDSGVL. The Tyrosine-protein phosphatase domain maps to 35 to 182; that stretch reads GPVSIDEVDT…LKLFRRMGCK (148 aa). Cys126 functions as the Phosphocysteine intermediate in the catalytic mechanism. Positions 248 to 267 are disordered; it reads LEHKPRDRPPQEVVPKEKEE.

This sequence belongs to the protein-tyrosine phosphatase family. Non-receptor class dual specificity subfamily. As to quaternary structure, interacts (via tyrosine-protein phosphatase domain) with bsk/JNK; the interaction dephosphorylates bsk.

The protein resides in the nucleus. The protein localises to the cytoplasm. It carries out the reaction O-phospho-L-tyrosyl-[protein] + H2O = L-tyrosyl-[protein] + phosphate. It catalyses the reaction O-phospho-L-seryl-[protein] + H2O = L-seryl-[protein] + phosphate. The catalysed reaction is O-phospho-L-threonyl-[protein] + H2O = L-threonyl-[protein] + phosphate. Its activity is regulated as follows. Inhibited by the tyrosine phosphatase inhibitor sodium vanadate. Functionally, dual specificity phosphatase; can dephosphorylate both phosphotyrosine and phosphoserine or phosphothreonine residues. May suppress bsk/JNK activation during the immune response. The protein is Dual specificity protein phosphatase MPK-4 of Drosophila melanogaster (Fruit fly).